Reading from the N-terminus, the 439-residue chain is tRNA(Ile)-lysidine synthase (439 aa).

23–28 (SGGLDS) is a binding site for ATP.

It belongs to the tRNA(Ile)-lysidine synthase family.

The protein localises to the cytoplasm. It carries out the reaction cytidine(34) in tRNA(Ile2) + L-lysine + ATP = lysidine(34) in tRNA(Ile2) + AMP + diphosphate + H(+). Its function is as follows. Ligates lysine onto the cytidine present at position 34 of the AUA codon-specific tRNA(Ile) that contains the anticodon CAU, in an ATP-dependent manner. Cytidine is converted to lysidine, thus changing the amino acid specificity of the tRNA from methionine to isoleucine. The chain is tRNA(Ile)-lysidine synthase from Methylococcus capsulatus (strain ATCC 33009 / NCIMB 11132 / Bath).